The sequence spans 263 residues: Endonuclease 8 (263 aa).

Pro-2 functions as the Schiff-base intermediate with DNA in the catalytic mechanism. Catalysis depends on Glu-3, which acts as the Proton donor. Lys-53 serves as the catalytic Proton donor; for beta-elimination activity. Gln-70, Arg-125, and Asn-169 together coordinate DNA. An FPG-type zinc finger spans residues 229–263; the sequence is KLFHRDGEACERCGGIIEKTTLSSRPFYWCPHCQK. Arg-253 acts as the Proton donor; for delta-elimination activity in catalysis.

The protein belongs to the FPG family. Zn(2+) is required as a cofactor.

It catalyses the reaction 2'-deoxyribonucleotide-(2'-deoxyribose 5'-phosphate)-2'-deoxyribonucleotide-DNA = a 3'-end 2'-deoxyribonucleotide-(2,3-dehydro-2,3-deoxyribose 5'-phosphate)-DNA + a 5'-end 5'-phospho-2'-deoxyribonucleoside-DNA + H(+). Functionally, involved in base excision repair of DNA damaged by oxidation or by mutagenic agents. Acts as a DNA glycosylase that recognizes and removes damaged bases. Has a preference for oxidized pyrimidines, such as thymine glycol, 5,6-dihydrouracil and 5,6-dihydrothymine. Has AP (apurinic/apyrimidinic) lyase activity and introduces nicks in the DNA strand. Cleaves the DNA backbone by beta-delta elimination to generate a single-strand break at the site of the removed base with both 3'- and 5'-phosphates. The sequence is that of Endonuclease 8 from Salmonella typhimurium (strain SL1344).